We begin with the raw amino-acid sequence, 103 residues long: Large ribosomal subunit protein bL21 (103 aa).

The protein belongs to the bacterial ribosomal protein bL21 family. In terms of assembly, part of the 50S ribosomal subunit. Contacts protein L20.

Functionally, this protein binds to 23S rRNA in the presence of protein L20. The protein is Large ribosomal subunit protein bL21 of Legionella pneumophila (strain Lens).